Consider the following 274-residue polypeptide: MTDVEPSPYGDCKFVARVEHIKTFIQAIKSICFNDYGMVQVSEDGLRITVEQGKSIQATLFMPPGAFMEFRVQDFQCFGVKMNVLSECLSLFGSADCSLRMMYRDKGDPLKIILYPHDDDDVSTECAIKTMDCDEPIDYDQNLKDPDLNVIFVRGPNLSKVFNELEKSAEEFEFVTSPNRPHFKITTVGIMQAVFSVEVAKTSPMMMMFNCKQTVVARYKSQQIRMTNKAMQSATKVAIKTNSVGLLELHLVMQGDSQEEIFIQFFIIPLLNTD.

It belongs to the rad1 family. In terms of assembly, component of the 9-1-1 checkpoint clamp complex consisting of Rad9 isoform A, Rad1 and Hus1-like; the interaction with Hus1-like is direct. Does not interact directly with Rad9; this interaction is probably mediated by Hus1-like. This complex probably also forms with Rad9 isoform B, however 9-1-1 complex containing Rad9 isoform A localizes to the nuclear periphery. Expressed in ovary.

The protein resides in the cytoplasm. It is found in the nucleus. The protein localises to the nucleus envelope. This chain is DNA repair protein Rad1, found in Drosophila melanogaster (Fruit fly).